We begin with the raw amino-acid sequence, 67 residues long: Large ribosomal subunit protein bL35 (67 aa).

This sequence belongs to the bacterial ribosomal protein bL35 family.

The polypeptide is Large ribosomal subunit protein bL35 (Leptospira borgpetersenii serovar Hardjo-bovis (strain JB197)).